A 246-amino-acid polypeptide reads, in one-letter code: Ureidoacrylate amidohydrolase RutB (246 aa).

The segment at 1–27 (MSAVTAAGYQAPQERSQSVTLPARPEP) is disordered. Residue D41 is the Proton acceptor of the active site. The active site involves K150. C183 (nucleophile) is an active-site residue.

This sequence belongs to the isochorismatase family. RutB subfamily.

It carries out the reaction (Z)-3-ureidoacrylate + H2O + H(+) = (Z)-3-aminoacrylate + NH4(+) + CO2. The catalysed reaction is (Z)-3-ureidoacrylate + H2O = (Z)-3-aminoacrylate + carbamate + H(+). The enzyme catalyses (Z)-2-methylureidoacrylate + H2O + H(+) = (Z)-2-methylaminoacrylate + NH4(+) + CO2. Its function is as follows. Hydrolyzes ureidoacrylate to form aminoacrylate and carbamate. The carbamate hydrolyzes spontaneously, thereby releasing one of the nitrogen atoms of the pyrimidine ring as ammonia and one of its carbon atoms as CO2. This Rhizobium rhizogenes (strain K84 / ATCC BAA-868) (Agrobacterium radiobacter) protein is Ureidoacrylate amidohydrolase RutB.